Here is a 483-residue protein sequence, read N- to C-terminus: FK506-binding protein 4 (483 aa).

2 disordered regions span residues 41-171 and 208-371; these read TAEP…EEFV and TGNY…LKKP. The span at 68-93 shows a compositional bias: acidic residues; the sequence is EEDDDEYLDIDGEDSEDDEESDDEEV. Composition is skewed to basic and acidic residues over residues 108-121 and 130-150; these read REAAIKKLLEATKE and ADAKPNGKGKKDSKGKAKASE. 3 stretches are compositionally biased toward acidic residues: residues 151–167, 216–233, and 241–256; these read SDDEKSDEDDEEGEPNF, GQDEEDDEDEEDYSDEEY, and LESDSDYESDELDEID. Basic and acidic residues-rich tracts occupy residues 298–309, 323–344, and 351–370; these read LVAKDKKQAEKQ, ENKDVKKEGKSDKKVQFAKDLE, and AKDKLEKKEEKKDDKADLKK. The region spanning 397–483 is the PPIase FKBP-type domain; it reads GDRVSLRYIG…VFDIKLLEIK (87 aa).

Belongs to the FKBP-type PPIase family. FKBP3/4 subfamily. As to quaternary structure, binds to histones H3 and H4.

It is found in the nucleus. It catalyses the reaction [protein]-peptidylproline (omega=180) = [protein]-peptidylproline (omega=0). PPIase that acts as a histone chaperone. Histone proline isomerase that increases the rate of cis-trans isomerization at prolines on the histone H3 N-terminal tail. Proline isomerization influences H3 methylation thereby regulating gene expression. This Chaetomium thermophilum (strain DSM 1495 / CBS 144.50 / IMI 039719) (Thermochaetoides thermophila) protein is FK506-binding protein 4 (FPR4).